The primary structure comprises 336 residues: tRNA N6-adenosine threonylcarbamoyltransferase (336 aa).

Fe cation is bound by residues H111 and H115. Substrate is bound by residues V134 to G138, D167, G180, D184, and N272. D300 serves as a coordination point for Fe cation.

Belongs to the KAE1 / TsaD family. Requires Fe(2+) as cofactor.

It is found in the cytoplasm. The catalysed reaction is L-threonylcarbamoyladenylate + adenosine(37) in tRNA = N(6)-L-threonylcarbamoyladenosine(37) in tRNA + AMP + H(+). Required for the formation of a threonylcarbamoyl group on adenosine at position 37 (t(6)A37) in tRNAs that read codons beginning with adenine. Is involved in the transfer of the threonylcarbamoyl moiety of threonylcarbamoyl-AMP (TC-AMP) to the N6 group of A37, together with TsaE and TsaB. TsaD likely plays a direct catalytic role in this reaction. In Caldicellulosiruptor saccharolyticus (strain ATCC 43494 / DSM 8903 / Tp8T 6331), this protein is tRNA N6-adenosine threonylcarbamoyltransferase.